Reading from the N-terminus, the 133-residue chain is Small ribosomal subunit protein uS8 (133 aa).

Belongs to the universal ribosomal protein uS8 family. In terms of assembly, part of the 30S ribosomal subunit.

Its function is as follows. One of the primary rRNA binding proteins, it binds directly to 16S rRNA central domain where it helps coordinate assembly of the platform of the 30S subunit. The chain is Small ribosomal subunit protein uS8 from Saccharolobus islandicus (strain L.S.2.15 / Lassen #1) (Sulfolobus islandicus).